Here is a 506-residue protein sequence, read N- to C-terminus: Anaerobic nitric oxide reductase transcription regulator NorR (506 aa).

Residue D57 is modified to 4-aspartylphosphate. The Sigma-54 factor interaction domain occupies 187–416 (MIGLSPNMMQ…LEHAIHRAVV (230 aa)). Residues 215-222 (GETGTGKE) and 278-287 (ADNGTLFLDE) each bind ATP. Residues 481–500 (WAACARALETDVANLHRLAK) constitute a DNA-binding region (H-T-H motif).

The protein operates within nitrogen metabolism; nitric oxide reduction. Its function is as follows. Required for the expression of anaerobic nitric oxide (NO) reductase, acts as a transcriptional activator for at least the norVW operon. Activation also requires sigma-54. This chain is Anaerobic nitric oxide reductase transcription regulator NorR, found in Citrobacter koseri (strain ATCC BAA-895 / CDC 4225-83 / SGSC4696).